We begin with the raw amino-acid sequence, 325 residues long: Putative ankyrin repeat protein RF_0011 (325 aa).

ANK repeat units lie at residues 63–94, 99–130, and 134–164; these read NGNTTLILAADAGLEEACLKLIPKMSDEAINM, RGQPALVKAMWRDLDSVCIELIPKMSKENINA, and CGRTLLMLAAKKGMTTVSKMFINLMPPEMII.

The protein is Putative ankyrin repeat protein RF_0011 of Rickettsia felis (strain ATCC VR-1525 / URRWXCal2) (Rickettsia azadi).